The primary structure comprises 243 residues: UPF0758 protein alr2351 (243 aa).

The MPN domain occupies 113–235 (PIDSPVAAVA…HQSLREITTL (123 aa)). Residues His184, His186, and Asp197 each coordinate Zn(2+). Positions 184 to 197 (HNHPSGNVEPSPED) match the JAMM motif motif.

Belongs to the UPF0758 family.

The sequence is that of UPF0758 protein alr2351 from Nostoc sp. (strain PCC 7120 / SAG 25.82 / UTEX 2576).